Here is a 385-residue protein sequence, read N- to C-terminus: Leucine aminopeptidase 1 (385 aa).

An N-terminal signal peptide occupies residues 1–20; the sequence is MKFPSLLSLGVAASTTIVAA. Residues 21–87 constitute a propeptide that is removed on maturation; sequence VPDQKPIGDI…FPKTFAQTTV (67 aa). An N-linked (GlcNAc...) asparagine glycan is attached at Asn-177. Zn(2+)-binding residues include His-185, Asp-204, Glu-243, and Asp-270. Residues Cys-319 and Cys-323 are joined by a disulfide bond. His-352 contributes to the Zn(2+) binding site.

Belongs to the peptidase M28 family. M28E subfamily. In terms of assembly, monomer. The cofactor is Zn(2+).

It localises to the secreted. In terms of biological role, extracellular aminopeptidase that allows assimilation of proteinaceous substrates. The protein is Leucine aminopeptidase 1 (LAP1) of Ajellomyces capsulatus (strain G186AR / H82 / ATCC MYA-2454 / RMSCC 2432) (Darling's disease fungus).